Consider the following 591-residue polypeptide: L-fucose isomerase (591 aa).

Residues Glu337 and Asp361 each act as proton acceptor in the active site. The Mn(2+) site is built by Glu337, Asp361, and His528.

It belongs to the L-fucose isomerase family. As to quaternary structure, homohexamer. Mn(2+) serves as cofactor.

The protein resides in the cytoplasm. The catalysed reaction is L-fucose = L-fuculose. Its pathway is carbohydrate degradation; L-fucose degradation; L-lactaldehyde and glycerone phosphate from L-fucose: step 1/3. Functionally, converts the aldose L-fucose into the corresponding ketose L-fuculose. This is L-fucose isomerase from Escherichia coli (strain UTI89 / UPEC).